A 180-amino-acid chain; its full sequence is Small ribosomal subunit protein bS18 (180 aa).

Disordered stretches follow at residues 1 to 26 (MKNK…AHKV) and 53 to 82 (YSDK…DKES).

It belongs to the bacterial ribosomal protein bS18 family. In terms of assembly, part of the 30S ribosomal subunit. Forms a tight heterodimer with protein bS6.

Functionally, binds as a heterodimer with protein bS6 to the central domain of the 16S rRNA, where it helps stabilize the platform of the 30S subunit. This is Small ribosomal subunit protein bS18 from Karelsulcia muelleri (strain GWSS) (Sulcia muelleri).